A 393-amino-acid polypeptide reads, in one-letter code: Protein TsgA (393 aa).

Residues 1-10 (MTNSNRIKLT) are Cytoplasmic-facing. The chain crosses the membrane as a helical span at residues 11–31 (WISFLSYALTGALVIVTGMVM). At 32 to 50 (GNIADYFHLPVSSMSNTFT) the chain is on the periplasmic side. The chain crosses the membrane as a helical span at residues 51-71 (FLNAGILISIFLNAWLMEIIP). Over 72-77 (LKTQLR) the chain is Cytoplasmic. The chain crosses the membrane as a helical span at residues 78–98 (FGFILMVLAVAGLMFGHSLAL). The Periplasmic portion of the chain corresponds to 99 to 100 (FS). The chain crosses the membrane as a helical span at residues 101–121 (AAMFVLGLVSGITMSIGTFLI). Residues 122–133 (TQLYEGRQRGSR) are Cytoplasmic-facing. Residues 134–154 (LLFTDSFFSMAGMIFPMVAAF) traverse the membrane as a helical segment. At 155–161 (LLARSIE) the chain is on the periplasmic side. The chain crosses the membrane as a helical span at residues 162–182 (WYWVYACIGLVYLAIFILTFG). The Cytoplasmic portion of the chain corresponds to 183-205 (CEFPALGKHAQHSQAPVVKEKWG). The helical transmembrane segment at 206-226 (IGVLFLAVAALCYILGQLGFI) threads the bilayer. Residues 227–244 (SWVPEYAKGLGMSLNDAG) are Periplasmic-facing. A helical membrane pass occupies residues 245–265 (ALVSDFWMSYMFGMWAFSFIL). Topologically, residues 266–272 (RFFDLQR) are cytoplasmic. The chain crosses the membrane as a helical span at residues 273-293 (ILTVLAGMAAVLMYLFITGTQ). Residues 294-297 (AHMP) lie on the Periplasmic side of the membrane. Residues 298–318 (WFILTLGFFSSAIYTSIITLG) traverse the membrane as a helical segment. Topologically, residues 319–331 (SQQTKVASPKLVN) are cytoplasmic. The helical transmembrane segment at 332-352 (FILTCGTIGTMLTFVVTGPIV) threads the bilayer. Topologically, residues 353–360 (AHSGPQAA) are periplasmic. Residues 361 to 381 (LLTANGLYAVVFVMCFALGFV) traverse the membrane as a helical segment. The Cytoplasmic segment spans residues 382 to 393 (SRHRQHSAPATH).

It belongs to the major facilitator superfamily. TsgA family.

It localises to the cell inner membrane. This is Protein TsgA from Salmonella choleraesuis (strain SC-B67).